The primary structure comprises 171 residues: Small ribosomal subunit protein uS5 (171 aa).

Residues 14–77 (YIEKLVNIRR…DKARKAMKNV (64 aa)) enclose the S5 DRBM domain.

This sequence belongs to the universal ribosomal protein uS5 family. Part of the 30S ribosomal subunit. Contacts proteins S4 and S8.

In terms of biological role, with S4 and S12 plays an important role in translational accuracy. Its function is as follows. Located at the back of the 30S subunit body where it stabilizes the conformation of the head with respect to the body. The polypeptide is Small ribosomal subunit protein uS5 (Vesicomyosocius okutanii subsp. Calyptogena okutanii (strain HA)).